Here is a 471-residue protein sequence, read N- to C-terminus: 5-hydroxytryptamine receptor 2A (471 aa).

Residues Met-1 to Leu-80 lie on the Extracellular side of the membrane. Asn-8, Asn-38, Asn-44, Asn-51, and Asn-54 each carry an N-linked (GlcNAc...) asparagine glycan. Residues Thr-81 to Met-97 form a helical membrane-spanning segment. The Cytoplasmic segment spans residues Ala-98 to Tyr-111. Residues Phe-112 to Tyr-137 traverse the membrane as a helical segment. The Extracellular segment spans residues Gly-138–Lys-146. Residues Leu-147–Leu-171 form a helical membrane-spanning segment. An intrachain disulfide couples Cys-148 to Cys-227. Asp-155 provides a ligand contact to serotonin. Residues Asp-172–Tyr-174 carry the DRY motif; important for ligand-induced conformation changes motif. The Cytoplasmic portion of the chain corresponds to Asp-172 to Lys-191. The chain crosses the membrane as a helical span at residues Ala-192–Leu-215. At Gln-216–Asp-232 the chain is on the extracellular side. The chain crosses the membrane as a helical span at residues Asn-233–Ile-258. Residues Lys-259–Cys-322 are Cytoplasmic-facing. Phosphoserine is present on Ser-280. A helical membrane pass occupies residues Lys-323–Ile-348. Asn-343 provides a ligand contact to serotonin. A disulfide bridge connects residues Cys-349 and Cys-353. The Extracellular portion of the chain corresponds to Cys-349–His-356. The chain crosses the membrane as a helical span at residues Val-357–Leu-382. The NPxxY motif; important for ligand-induced conformation changes and signaling motif lies at Asn-376 to Tyr-380. Topologically, residues Phe-383–Val-471 are cytoplasmic. Positions Ser-469–Val-471 match the PDZ-binding motif.

Belongs to the G-protein coupled receptor 1 family. As to quaternary structure, interacts (via C-terminus) with MPDZ and PATJ. May interact (via C-terminus) with MPP3, PRDX6, DLG4, DLG1, CASK, APBA1 and MAGI2. Interacts with GRM2 and DRD2; this may affect signaling.

The protein localises to the cell membrane. Its subcellular location is the cell projection. It is found in the dendrite. The protein resides in the axon. It localises to the cytoplasmic vesicle. The protein localises to the membrane. Its subcellular location is the caveola. It is found in the presynapse. Its activity is regulated as follows. G-protein coupled receptor activity is regulated by lipids: oleamide increases HTR2A-mediated activity. In terms of biological role, G-protein coupled receptor for 5-hydroxytryptamine (serotonin). Also functions as a receptor for various drugs and psychoactive substances, including mescaline, psilocybin, 1-(2,5-dimethoxy-4-iodophenyl)-2-aminopropane (DOI) and lysergic acid diethylamide (LSD). Ligand binding causes a conformation change that triggers signaling via guanine nucleotide-binding proteins (G proteins) and modulates the activity of downstream effectors. HTR2A is coupled to G(q)/G(11) G alpha proteins and activates phospholipase C-beta, releasing diacylglycerol (DAG) and inositol 1,4,5-trisphosphate (IP3) second messengers that modulate the activity of phosphatidylinositol 3-kinase and promote the release of Ca(2+) ions from intracellular stores, respectively. Beta-arrestin family members inhibit signaling via G proteins and mediate activation of alternative signaling pathways. Affects neural activity, perception, cognition and mood. Plays a role in the regulation of behavior, including responses to anxiogenic situations and psychoactive substances. Plays a role in intestinal smooth muscle contraction, and may play a role in arterial vasoconstriction. This chain is 5-hydroxytryptamine receptor 2A (HTR2A), found in Cricetulus griseus (Chinese hamster).